The sequence spans 104 residues: UPF0145 protein RD1_2695 (104 aa).

Belongs to the UPF0145 family.

This Roseobacter denitrificans (strain ATCC 33942 / OCh 114) (Erythrobacter sp. (strain OCh 114)) protein is UPF0145 protein RD1_2695.